We begin with the raw amino-acid sequence, 465 residues long: ATP-dependent protease ATPase subunit HslU (465 aa).

ATP contacts are provided by residues Val-18, 60 to 65 (GVGKTE), Asp-277, Glu-342, and Arg-414.

This sequence belongs to the ClpX chaperone family. HslU subfamily. In terms of assembly, a double ring-shaped homohexamer of HslV is capped on each side by a ring-shaped HslU homohexamer. The assembly of the HslU/HslV complex is dependent on binding of ATP.

The protein resides in the cytoplasm. ATPase subunit of a proteasome-like degradation complex; this subunit has chaperone activity. The binding of ATP and its subsequent hydrolysis by HslU are essential for unfolding of protein substrates subsequently hydrolyzed by HslV. HslU recognizes the N-terminal part of its protein substrates and unfolds these before they are guided to HslV for hydrolysis. The polypeptide is ATP-dependent protease ATPase subunit HslU (Caldicellulosiruptor saccharolyticus (strain ATCC 43494 / DSM 8903 / Tp8T 6331)).